Consider the following 415-residue polypeptide: Exodeoxyribonuclease 7 large subunit (415 aa).

The protein belongs to the XseA family. As to quaternary structure, heterooligomer composed of large and small subunits.

The protein resides in the cytoplasm. It catalyses the reaction Exonucleolytic cleavage in either 5'- to 3'- or 3'- to 5'-direction to yield nucleoside 5'-phosphates.. Functionally, bidirectionally degrades single-stranded DNA into large acid-insoluble oligonucleotides, which are then degraded further into small acid-soluble oligonucleotides. The protein is Exodeoxyribonuclease 7 large subunit of Mycobacterium bovis (strain ATCC BAA-935 / AF2122/97).